A 103-amino-acid chain; its full sequence is Small ribosomal subunit protein bS20 (103 aa).

Residues 1 to 20 (MATAKPKKKNPRLASGRKRV) are compositionally biased toward basic residues. The interval 1 to 31 (MATAKPKKKNPRLASGRKRVRQDTKLNAANT) is disordered.

Belongs to the bacterial ribosomal protein bS20 family.

In terms of biological role, binds directly to 16S ribosomal RNA. This Polaromonas sp. (strain JS666 / ATCC BAA-500) protein is Small ribosomal subunit protein bS20.